A 617-amino-acid polypeptide reads, in one-letter code: Neurosecretory protein VGF (617 aa).

The signal sequence occupies residues 1–23; that stretch reads MKTFTLPASVLFCFLLLIQGLGA. Disordered stretches follow at residues 29 to 75, 93 to 204, and 239 to 262; these read PDVF…GELF, RPAS…ESPG, and SESA…THLG. Residues 48–64 show a composition bias toward basic and acidic residues; sequence AVSRPKDDGVPEVRAAR. Residues 149–160 are compositionally biased toward acidic residues; sequence DPEEDDRSEELE. Residues 182-197 are compositionally biased toward low complexity; sequence ETAAAETETRTHTLTR. Gln-313 is subject to Pyrrolidone carboxylic acid. The span at 345 to 364 shows a compositional bias: basic and acidic residues; sequence RQRDLGGRELQETQQERENE. Residues 345-599 form a disordered region; sequence RQRDLGGREL…EEADAEERRL (255 aa). Residues 378 to 397 are compositionally biased toward acidic residues; it reads EDDVGEEDEEAAEAEAEAEE. A compositionally biased stretch (basic and acidic residues) spans 418 to 436; the sequence is AEDKRSQEEAPGHRRKDAE. A Phosphoserine modification is found at Ser-423. The span at 437–452 shows a compositional bias: acidic residues; it reads GAEEGGEEDDDDEEMD. The span at 491–501 shows a compositional bias: pro residues; it reads PPEPVPPPRAA. Over residues 577–599 the composition is skewed to basic and acidic residues; sequence HHPDLEAQARRAQEEADAEERRL.

Interacts with HSPA8 on cell membrane. Interacts with C3AR1. Interacts with C1QBP.

The protein localises to the secreted. The protein resides in the cytoplasmic vesicle. It is found in the secretory vesicle. In terms of biological role, secreted polyprotein that is packaged and proteolytically processed by prohormone convertases PCSK1 and PCSK2 in a cell-type-specific manner. VGF and peptides derived from its processing play many roles in neurogenesis and neuroplasticity associated with learning, memory, depression and chronic pain. Functionally, plays a role in the control of body fluid homeostasis by regulating vasopressin release. Suppresses presynaptic glutamatergic neurons connected to vasopressin neurons. Its function is as follows. Plays a role in the control of body fluid homeostasis by regulating vasopressin release. Activates GABAergic interneurons which are inhibitory neurons of the nervous system and thereby suppresses presynaptic glutamatergic neurons. Also stimulates feeding behavior in an orexin-dependent manner in the hypothalamus. Functions as a positive regulator for the activation of orexin neurons resulting in elevated gastric acid secretion and gastric emptying. Secreted multifunctional peptide that interacts with different receptors and thereby plays multiple physiological roles including modulation of energy expenditure, pain, response to stress, gastric regulation as well as lipolysis. Activates the G-protein-coupled receptor C3AR1 via a folding-upon-binding mechanism leading to enhanced lipolysis in adipocytes. Interacts with gC1qR receptor in macrophages and microglia causing increased levels of intracellular calcium and hypersensitivity. In terms of biological role, plays a role in the regulation of memory formation and depression-related behaviors potentially by influencing synaptic plasticity and neurogenesis. Induces acute and transient activation of the NTRK2/TRKB receptor and subsequent CREB phosphorylation. Also induces insulin secretion in insulinoma cells by increasing intracellular calcium mobilization. The polypeptide is Neurosecretory protein VGF (Mus musculus (Mouse)).